A 407-amino-acid polypeptide reads, in one-letter code: uncharacterized protein (407 aa).

Lys22 participates in a covalent cross-link: Glycyl lysine isopeptide (Lys-Gly) (interchain with G-Cter in ubiquitin).

Belongs to the SVF1 family.

It localises to the cytoplasm. This is an uncharacterized protein from Saccharomyces cerevisiae (strain ATCC 204508 / S288c) (Baker's yeast).